The following is a 154-amino-acid chain: Peptide methionine sulfoxide reductase MsrB (154 aa).

One can recognise a MsrB domain in the interval 28 to 150 (DQQWREQLSE…NSVSLIFNKI (123 aa)). Zn(2+)-binding residues include cysteine 67, cysteine 70, cysteine 116, and cysteine 119. Catalysis depends on cysteine 139, which acts as the Nucleophile.

It belongs to the MsrB Met sulfoxide reductase family. It depends on Zn(2+) as a cofactor.

The catalysed reaction is L-methionyl-[protein] + [thioredoxin]-disulfide + H2O = L-methionyl-(R)-S-oxide-[protein] + [thioredoxin]-dithiol. In Vibrio vulnificus (strain CMCP6), this protein is Peptide methionine sulfoxide reductase MsrB.